Consider the following 241-residue polypeptide: Probable 2-phosphosulfolactate phosphatase (241 aa).

It belongs to the ComB family. It depends on Mg(2+) as a cofactor.

The catalysed reaction is (2R)-O-phospho-3-sulfolactate + H2O = (2R)-3-sulfolactate + phosphate. This chain is Probable 2-phosphosulfolactate phosphatase, found in Deinococcus geothermalis (strain DSM 11300 / CIP 105573 / AG-3a).